Consider the following 83-residue polypeptide: Large ribosomal subunit protein bL31B (83 aa).

The protein belongs to the bacterial ribosomal protein bL31 family. Type B subfamily. Part of the 50S ribosomal subunit.

This chain is Large ribosomal subunit protein bL31B, found in Tropheryma whipplei (strain TW08/27) (Whipple's bacillus).